The primary structure comprises 439 residues: GTPase Obg (439 aa).

The Obg domain maps to 1-159 (MAFVDQAQIE…RNLKLELKVL (159 aa)). In terms of domain architecture, OBG-type G spans 160–336 (ADVGLVGFPS…LMRLTADMLA (177 aa)). GTP-binding positions include 166 to 173 (GFPSAGKS), 191 to 195 (FTTLS), 213 to 216 (DLPG), 283 to 286 (TKMD), and 317 to 319 (SSI). Mg(2+) contacts are provided by Ser173 and Thr193. The disordered stretch occupies residues 338–357 (APAPESYRPETKNDTSEKSY). Residues 344 to 354 (YRPETKNDTSE) are compositionally biased toward basic and acidic residues. Positions 358–439 (TFKPETHDFT…NSDFVFEFSE (82 aa)) constitute an OCT domain.

It belongs to the TRAFAC class OBG-HflX-like GTPase superfamily. OBG GTPase family. As to quaternary structure, monomer. The cofactor is Mg(2+).

It is found in the cytoplasm. An essential GTPase which binds GTP, GDP and possibly (p)ppGpp with moderate affinity, with high nucleotide exchange rates and a fairly low GTP hydrolysis rate. Plays a role in control of the cell cycle, stress response, ribosome biogenesis and in those bacteria that undergo differentiation, in morphogenesis control. The polypeptide is GTPase Obg (Leuconostoc mesenteroides subsp. mesenteroides (strain ATCC 8293 / DSM 20343 / BCRC 11652 / CCM 1803 / JCM 6124 / NCDO 523 / NBRC 100496 / NCIMB 8023 / NCTC 12954 / NRRL B-1118 / 37Y)).